The chain runs to 300 residues: Tyrosine recombinase XerC (300 aa).

Residues 2–88 enclose the Core-binding (CB) domain; the sequence is IQEGKLEQQF…SLRSFYTFLL (87 aa). Residues 109-294 enclose the Tyr recombinase domain; it reads RLPKFFYSEE…TKEHLKSTYM (186 aa). Residues arginine 150, lysine 174, histidine 246, arginine 249, and histidine 272 contribute to the active site. Tyrosine 281 serves as the catalytic O-(3'-phospho-DNA)-tyrosine intermediate.

Belongs to the 'phage' integrase family. XerC subfamily. In terms of assembly, forms a cyclic heterotetrameric complex composed of two molecules of XerC and two molecules of XerD.

It is found in the cytoplasm. In terms of biological role, site-specific tyrosine recombinase, which acts by catalyzing the cutting and rejoining of the recombining DNA molecules. The XerC-XerD complex is essential to convert dimers of the bacterial chromosome into monomers to permit their segregation at cell division. It also contributes to the segregational stability of plasmids. This chain is Tyrosine recombinase XerC, found in Listeria monocytogenes serovar 1/2a (strain ATCC BAA-679 / EGD-e).